Reading from the N-terminus, the 418-residue chain is Hydroxysteroid dehydrogenase-like protein 2 (418 aa).

NADP(+) is bound by residues Gly17 to Gly23, Lys42, and Asp74. Residue Lys42 is modified to N6-(2-hydroxyisobutyryl)lysine. Position 116 is an N6-acetyllysine (Lys116). The Proton acceptor role is filled by Tyr168. An NADP(+)-binding site is contributed by Lys172. Residues Ser287–Val310 form a disordered region. Residues Arg306–Asn415 enclose the SCP2 domain. An N6-succinyllysine modification is found at Lys318.

It belongs to the short-chain dehydrogenases/reductases (SDR) family.

The protein localises to the peroxisome. It localises to the mitochondrion. Its function is as follows. Has apparently no steroid dehydrogenase activity. Controls bile acid (BA) and lipid metabolism in response to nutritional cues. This chain is Hydroxysteroid dehydrogenase-like protein 2 (HSDL2), found in Pongo abelii (Sumatran orangutan).